A 371-amino-acid chain; its full sequence is Peptide chain release factor 2 (371 aa).

Gln250 carries the post-translational modification N5-methylglutamine.

This sequence belongs to the prokaryotic/mitochondrial release factor family. In terms of processing, methylated by PrmC. Methylation increases the termination efficiency of RF2.

Its subcellular location is the cytoplasm. In terms of biological role, peptide chain release factor 2 directs the termination of translation in response to the peptide chain termination codons UGA and UAA. This Paramagnetospirillum magneticum (strain ATCC 700264 / AMB-1) (Magnetospirillum magneticum) protein is Peptide chain release factor 2.